The chain runs to 262 residues: tRNA (guanine-N(1)-)-methyltransferase (262 aa).

S-adenosyl-L-methionine contacts are provided by residues glycine 111 and 130-135; that span reads LGDFVL.

It belongs to the RNA methyltransferase TrmD family. In terms of assembly, homodimer.

The protein resides in the cytoplasm. The enzyme catalyses guanosine(37) in tRNA + S-adenosyl-L-methionine = N(1)-methylguanosine(37) in tRNA + S-adenosyl-L-homocysteine + H(+). Its function is as follows. Specifically methylates guanosine-37 in various tRNAs. This Desulfitobacterium hafniense (strain Y51) protein is tRNA (guanine-N(1)-)-methyltransferase.